The sequence spans 602 residues: Protein SHORT-ROOT 1 (602 aa).

Positions 12–55 (AASEQQQQQQQSASYNSRSTTSSGSRSSSHQTNASYSYYHHSSN) are enriched in low complexity. Disordered stretches follow at residues 12 to 69 (AASE…YYYG), 101 to 145 (DFSS…TAAG), and 165 to 185 (DFSS…AVGG). Over residues 56–68 (SGGGGGGGGGYYY) the composition is skewed to gly residues. Over residues 122-145 (PPASSTPTGTAPTPPLSTSSTAAG) the composition is skewed to low complexity. The segment covering 173-185 (SGGGTASSGAVGG) has biased composition (gly residues). Residues 183-601 (VGGGGGGRWA…QPLVWASAWR (419 aa)) enclose the GRAS domain. Residues 190 to 253 (RWASQLLLEC…LTASGPRTLR (64 aa)) are leucine repeat I (LRI). A VHIID region spans residues 272–349 (ALRFQELSPW…PHLSITTVVS (78 aa)). A VHIID motif is present at residues 311 to 315 (FHILD). The segment at 365–401 (EIGQRMEKFARLMGVPFRFRAVHHSGDLAELDLDALD) is leucine repeat II (LRII). The interval 411-517 (LAVNCVNSLR…ERGAGRAIVD (107 aa)) is PFYRE. The SAW stretch occupies residues 520–601 (SCPASESMER…QPLVWASAWR (82 aa)).

Belongs to the GRAS family. In terms of assembly, interacts with SCR1. Interacts with SMOS1. As to expression, expressed in leaves and roots. Detected in the stele, the endodermis and part of the cortex.

The protein localises to the nucleus. In terms of biological role, transcription factor required for the asymmetric cell division involved in radial pattern formation in roots. Essential for both cell division and cell specification. This is Protein SHORT-ROOT 1 from Oryza sativa subsp. japonica (Rice).